Consider the following 692-residue polypeptide: MSNAATGSRVLYLGSDQGLMRDLTALVEPKSVQLVQLGSASALAQELRRLAPEVVILDAAAVSVEGGLAAFLGTLYGGEAFHPRAICIARAGSGEDRMEQRLAALRAGAASYLVPPISVKRLASRVLRMCGIVETVRYRILILEQDASHAKKIASLLATIGMETLVVDDPMKILARMQAFRPNLVLMDLYLPGATGSELTTIIRDHDDFYGIPILFLSQEADLDKQLAALKAGGDGFIKKPVSREALIAAVEYRMRMSRWLQDRRTLVNRRETAGGFLPRDVFMRHLEQITRAREAQGGVHGLVIIDVDGSQGILNALGLTATEKLLRELESLLSKTMTPEESATRMDDFRYGLLAKRETLSKLEALASTLCQQLSGLKPQDRDIKLEVSVSVGVGLFDPPADDAFAMVSRAEKAAAGAKSAGGNQAHVWSAASRQNGAPEAESVIKRLVSTALAQDGFLLFFQPILSLNQQEDELYEAQIRMKTLDGEQMPPAEFLSVAERAEMMPRIDRWVLRRAFEVMHAERVAHPRLRLLVHQNVMTLAAPEWFPWFRDQIIKRNLTQIYPVLELQMADVRQNRAEAKVFIERLRKYGIQVCVANVTGIREEISLLARIGATLAKLAFQTIRNADRIQLTEIVQALQARGVAVIAAGIDDQATVSRVWTCRPDFIQGNYLQLPQPELSFDFQHMSHDG.

2 Response regulatory domains span residues 9–130 (RVLY…LRMC) and 139–255 (RILI…EYRM). Asp58 and Asp188 each carry 4-aspartylphosphate. Positions 299 to 432 (GVHGLVIIDV…GGNQAHVWSA (134 aa)) constitute a GGDEF domain. The EAL domain maps to 443–691 (ESVIKRLVST…SFDFQHMSHD (249 aa)).

This is an uncharacterized protein from Thiocystis violacea.